A 218-amino-acid chain; its full sequence is GEM-like protein 6 (218 aa).

Positions 96-174 (KIYKRLFKVC…CKINGVNQSQ (79 aa)) constitute a GRAM domain.

This sequence belongs to the GEM family.

This chain is GEM-like protein 6, found in Arabidopsis thaliana (Mouse-ear cress).